A 344-amino-acid polypeptide reads, in one-letter code: Ketol-acid reductoisomerase (NADP(+)) (344 aa).

Positions A2–T181 constitute a KARI N-terminal Rossmann domain. NADP(+)-binding positions include Y25–Q28, R48, S52, and D82–Q85. H107 is an active-site residue. NADP(+) is bound at residue G133. Residues S182–V327 form the KARI C-terminal knotted domain. Mg(2+) is bound by residues D190, E194, E226, and E230. S251 lines the substrate pocket.

Belongs to the ketol-acid reductoisomerase family. Mg(2+) is required as a cofactor.

It carries out the reaction (2R)-2,3-dihydroxy-3-methylbutanoate + NADP(+) = (2S)-2-acetolactate + NADPH + H(+). The catalysed reaction is (2R,3R)-2,3-dihydroxy-3-methylpentanoate + NADP(+) = (S)-2-ethyl-2-hydroxy-3-oxobutanoate + NADPH + H(+). The protein operates within amino-acid biosynthesis; L-isoleucine biosynthesis; L-isoleucine from 2-oxobutanoate: step 2/4. It participates in amino-acid biosynthesis; L-valine biosynthesis; L-valine from pyruvate: step 2/4. Its function is as follows. Involved in the biosynthesis of branched-chain amino acids (BCAA). Catalyzes an alkyl-migration followed by a ketol-acid reduction of (S)-2-acetolactate (S2AL) to yield (R)-2,3-dihydroxy-isovalerate. In the isomerase reaction, S2AL is rearranged via a Mg-dependent methyl migration to produce 3-hydroxy-3-methyl-2-ketobutyrate (HMKB). In the reductase reaction, this 2-ketoacid undergoes a metal-dependent reduction by NADPH to yield (R)-2,3-dihydroxy-isovalerate. This chain is Ketol-acid reductoisomerase (NADP(+)), found in Oceanobacillus iheyensis (strain DSM 14371 / CIP 107618 / JCM 11309 / KCTC 3954 / HTE831).